The chain runs to 260 residues: Cell wall synthesis protein Wag31 (260 aa).

Positions 31–64 form a coiled coil; sequence FLDLVENELTRLIEENSDLRQRINELDQELAAGG. Thr73 bears the Phosphothreonine mark. Positions 161–196 form a coiled coil; the sequence is MLADAQSRSEAQLRQAQEKADALQADAERKHSEIMG. Residues 233 to 260 form a disordered region; that stretch reads ELGQRGSAAPVDSNADAGGFDQFNRGKN.

The protein belongs to the DivIVA family. As to quaternary structure, forms homooligomers. Post-translationally, phosphorylated by PknA. Phosphorylation enhances polar localization, which in turn heightens polar peptidoglycan biosynthesis.

It is found in the cytoplasm. Its function is as follows. Important for maintaining cell shape and cell wall integrity by localizing peptidoglycan synthesis to the cell poles. The sequence is that of Cell wall synthesis protein Wag31 (wag31) from Mycobacterium tuberculosis (strain CDC 1551 / Oshkosh).